We begin with the raw amino-acid sequence, 460 residues long: Adenylyltransferase and sulfurtransferase MOCS3 (460 aa).

ATP contacts are provided by residues Gly92, Asp113, 120 to 124 (SNLAR), Lys137, and 181 to 182 (DN). Residues 158–238 (PRALAEDWAL…RPPPPETVTN (81 aa)) form an interaction with NFS1 region. Residues Cys222 and Cys225 each contribute to the Zn(2+) site. Cys239 acts as the Glycyl thioester intermediate; for adenylyltransferase activity in catalysis. Positions 297 and 300 each coordinate Zn(2+). Residues Cys316 and Cys324 are joined by a disulfide bond. In terms of domain architecture, Rhodanese spans 347–458 (SGAPHVLLDV…WAAKIDGTFP (112 aa)). Cys412 functions as the Cysteine persulfide intermediate; for sulfurtransferase activity in the catalytic mechanism. Cys412 carries the cysteine persulfide modification.

It in the N-terminal section; belongs to the HesA/MoeB/ThiF family. UBA4 subfamily. In terms of assembly, interacts with NFS1. Requires Zn(2+) as cofactor.

Its subcellular location is the cytoplasm. The protein resides in the cytosol. The enzyme catalyses [molybdopterin-synthase sulfur-carrier protein]-C-terminal Gly-Gly + ATP + H(+) = [molybdopterin-synthase sulfur-carrier protein]-C-terminal Gly-Gly-AMP + diphosphate. The catalysed reaction is [molybdopterin-synthase sulfur-carrier protein]-C-terminal Gly-Gly-AMP + S-sulfanyl-L-cysteinyl-[cysteine desulfurase] + AH2 = [molybdopterin-synthase sulfur-carrier protein]-C-terminal-Gly-aminoethanethioate + L-cysteinyl-[cysteine desulfurase] + A + AMP + 2 H(+). The protein operates within tRNA modification; 5-methoxycarbonylmethyl-2-thiouridine-tRNA biosynthesis. It participates in cofactor biosynthesis; molybdopterin biosynthesis. Plays a central role in 2-thiolation of mcm(5)S(2)U at tRNA wobble positions of cytosolic tRNA(Lys), tRNA(Glu) and tRNA(Gln). Also essential during biosynthesis of the molybdenum cofactor. Acts by mediating the C-terminal thiocarboxylation of sulfur carriers URM1 and MOCS2A. Its N-terminus first activates URM1 and MOCS2A as acyl-adenylates (-COAMP), then the persulfide sulfur on the catalytic cysteine is transferred to URM1 and MOCS2A to form thiocarboxylation (-COSH) of their C-terminus. The reaction probably involves hydrogen sulfide that is generated from the persulfide intermediate and that acts as a nucleophile towards URM1 and MOCS2A. Subsequently, a transient disulfide bond is formed. Does not use thiosulfate as sulfur donor; NFS1 acting as a sulfur donor for thiocarboxylation reactions. The protein is Adenylyltransferase and sulfurtransferase MOCS3 (Mocs3) of Mus musculus (Mouse).